We begin with the raw amino-acid sequence, 1233 residues long: Glutamate receptor ionotropic, NMDA 2C (1233 aa).

The N-terminal stretch at M1–A19 is a signal peptide. Over G20–A554 the chain is Extracellular. N-linked (GlcNAc...) asparagine glycosylation is found at N70 and N73. Residues C82 and C317 are joined by a disulfide bond. N337 and N438 each carry an N-linked (GlcNAc...) asparagine glycan. Cystine bridges form between C426–C453 and C433–C454. The L-glutamate site is built by S509, T511, and R516. N539 is a glycosylation site (N-linked (GlcNAc...) asparagine). The helical transmembrane segment at V555 to E575 threads the bilayer. The Cytoplasmic portion of the chain corresponds to Y576–T598. An intramembrane region (discontinuously helical) is located at residues I599–F611. The segment at K601–P620 is pore-forming. At N612–K626 the chain is on the cytoplasmic side. Residues I627 to T644 traverse the membrane as a helical segment. The Extracellular portion of the chain corresponds to A645 to D813. An N-linked (GlcNAc...) asparagine glycan is attached at N685. Positions 687, 688, and 729 each coordinate L-glutamate. C743 and C798 are oxidised to a cystine. A helical transmembrane segment spans residues N814–E836. At H837 to V1233 the chain is on the cytoplasmic side. S875, S881, and S912 each carry phosphoserine. Positions I920 to V994 are disordered. Composition is skewed to pro residues over residues A929–S956 and P975–P987. Residues S1231–V1233 carry the PDZ-binding motif.

This sequence belongs to the glutamate-gated ion channel (TC 1.A.10.1) family. NR2C/GRIN2C subfamily. Heterotetramer. Forms heterotetrameric channels composed of two GluN1/zeta subunits (GRIN1), and two identical GluN2/epsilon subunits (GRIN2A, GRIN2B, GRIN2C or GRIN2D) or GluN3 subunits (GRIN3A or GRIN3B) (in vitro). In vivo, the subunit composition may depend on the expression levels of the different subunits. Interacts with PDZ domains of PATJ and DLG4. Interacts (via PDZ-binding motif) with SNX27 (via PDZ domain); the interaction is required for recycling to the plasma membrane when endocytosed and prevent degradation in lysosomes. Mainly expressed in brain with predominant expression is in the cerebellum, also present in the hippocampus, amygdala, caudate nucleus, corpus callosum, subthalamic nuclei and thalamus. Detected in the heart, skeletal muscle and pancreas.

The protein resides in the cell membrane. It is found in the postsynaptic cell membrane. It carries out the reaction Ca(2+)(in) = Ca(2+)(out). The catalysed reaction is Na(+)(in) = Na(+)(out). The enzyme catalyses K(+)(in) = K(+)(out). Functionally, component of N-methyl-D-aspartate (NMDA) receptors (NMDARs) that function as heterotetrameric, ligand-gated cation channels with high calcium permeability and voltage-dependent block by Mg(2+). Participates in synaptic plasticity for learning and memory formation by contributing to the slow phase of excitatory postsynaptic current and long-term synaptic potentiation. Channel activation requires binding of the neurotransmitter L-glutamate to the GluN2 subunit, glycine or D-serine binding to the GluN1 subunit, plus membrane depolarization to eliminate channel inhibition by Mg(2+). NMDARs mediate simultaneously the potasium efflux and the influx of calcium and sodium. Each GluN2 subunit confers differential attributes to channel properties, including activation, deactivation and desensitization kinetics, pH sensitivity, Ca2(+) permeability, and binding to allosteric modulators. This is Glutamate receptor ionotropic, NMDA 2C from Homo sapiens (Human).